The chain runs to 82 residues: Myrmicitoxin(1)-Pm3a (82 aa).

The signal sequence occupies residues 1–23; sequence MEIPKLLYIAVIAIGLSGSLTCA. Positions 24–59 are excised as a propeptide; the sequence is TPLANPLADPEAEAEAKATAEATAEAIAEALAEPEP. A Leucine amide modification is found at Leu81.

Belongs to the formicidae venom clade 1 family. As to expression, expressed by the venom gland.

The protein resides in the secreted. Functionally, toxin that causes a slowly developing temporary paralysis when intrathoracically injected into insects (blowflies). Does not cause spontaneous nocifensive behaviors by intraplantar injection in mice. This Pogonomyrmex maricopa (Maricopa harvester ant) protein is Myrmicitoxin(1)-Pm3a.